Here is a 156-residue protein sequence, read N- to C-terminus: Biotin carboxyl carrier protein of acetyl-CoA carboxylase (156 aa).

Residues 73–156 form the Biotinyl-binding domain; that stretch reads PAAAEISGHI…EFDEPLVVIE (84 aa). At K122 the chain carries N6-biotinyllysine.

In terms of assembly, homodimer.

The protein operates within lipid metabolism; fatty acid biosynthesis. Its function is as follows. This protein is a component of the acetyl coenzyme A carboxylase complex; first, biotin carboxylase catalyzes the carboxylation of the carrier protein and then the transcarboxylase transfers the carboxyl group to form malonyl-CoA. The sequence is that of Biotin carboxyl carrier protein of acetyl-CoA carboxylase (accB) from Escherichia coli O6:H1 (strain CFT073 / ATCC 700928 / UPEC).